A 179-amino-acid chain; its full sequence is Large ribosomal subunit protein uL5 (179 aa).

This sequence belongs to the universal ribosomal protein uL5 family. Part of the 50S ribosomal subunit; part of the 5S rRNA/L5/L18/L25 subcomplex. Contacts the 5S rRNA and the P site tRNA. Forms a bridge to the 30S subunit in the 70S ribosome.

Functionally, this is one of the proteins that bind and probably mediate the attachment of the 5S RNA into the large ribosomal subunit, where it forms part of the central protuberance. In the 70S ribosome it contacts protein S13 of the 30S subunit (bridge B1b), connecting the 2 subunits; this bridge is implicated in subunit movement. Contacts the P site tRNA; the 5S rRNA and some of its associated proteins might help stabilize positioning of ribosome-bound tRNAs. This chain is Large ribosomal subunit protein uL5, found in Saccharophagus degradans (strain 2-40 / ATCC 43961 / DSM 17024).